A 113-amino-acid polypeptide reads, in one-letter code: Large ribosomal subunit protein P2 (113 aa).

The disordered stretch occupies residues 66-113 (PVGGGGAVAAADAAPAAAAGGDKKEAKKEEKKEESESEDDDMGFALFE). A compositionally biased stretch (low complexity) spans 73-85 (VAAADAAPAAAAG). The segment covering 86–99 (GDKKEAKKEEKKEE) has biased composition (basic and acidic residues). Phosphoserine occurs at positions 100 and 102.

The protein belongs to the eukaryotic ribosomal protein P1/P2 family. In terms of assembly, P1 and P2 exist as dimers at the large ribosomal subunit.

Plays an important role in the elongation step of protein synthesis. The chain is Large ribosomal subunit protein P2 (RpLP2) from Drosophila melanogaster (Fruit fly).